A 1216-amino-acid polypeptide reads, in one-letter code: DNA-directed RNA polymerase subunit beta' (1216 aa).

The Zn(2+) site is built by C60, C62, C75, and C78. Mg(2+) is bound by residues D450, D452, and D454. Zn(2+)-binding residues include C819, C893, C900, and C903.

The protein belongs to the RNA polymerase beta' chain family. The RNAP catalytic core consists of 2 alpha, 1 beta, 1 beta' and 1 omega subunit. When a sigma factor is associated with the core the holoenzyme is formed, which can initiate transcription. The cofactor is Mg(2+). Zn(2+) serves as cofactor.

It carries out the reaction RNA(n) + a ribonucleoside 5'-triphosphate = RNA(n+1) + diphosphate. DNA-dependent RNA polymerase catalyzes the transcription of DNA into RNA using the four ribonucleoside triphosphates as substrates. In Streptococcus agalactiae serotype Ia (strain ATCC 27591 / A909 / CDC SS700), this protein is DNA-directed RNA polymerase subunit beta'.